We begin with the raw amino-acid sequence, 133 residues long: UPF0102 protein CYA_0680 (133 aa).

This sequence belongs to the UPF0102 family.

This Synechococcus sp. (strain JA-3-3Ab) (Cyanobacteria bacterium Yellowstone A-Prime) protein is UPF0102 protein CYA_0680.